The sequence spans 245 residues: Ribonuclease PH (245 aa).

Phosphate is bound by residues Arg93 and 131-133 (GTR).

It belongs to the RNase PH family. As to quaternary structure, homohexameric ring arranged as a trimer of dimers.

The enzyme catalyses tRNA(n+1) + phosphate = tRNA(n) + a ribonucleoside 5'-diphosphate. Phosphorolytic 3'-5' exoribonuclease that plays an important role in tRNA 3'-end maturation. Removes nucleotide residues following the 3'-CCA terminus of tRNAs; can also add nucleotides to the ends of RNA molecules by using nucleoside diphosphates as substrates, but this may not be physiologically important. Probably plays a role in initiation of 16S rRNA degradation (leading to ribosome degradation) during starvation. The sequence is that of Ribonuclease PH from Corynebacterium glutamicum (strain R).